A 751-amino-acid polypeptide reads, in one-letter code: Semaphorin-3C (751 aa).

Residues M1–G21 form the signal peptide. Residues R28–L511 form the Sema domain. N-linked (GlcNAc...) asparagine glycosylation occurs at N81. C101 and C112 form a disulfide bridge. N123 carries an N-linked (GlcNAc...) asparagine glycan. 3 cysteine pairs are disulfide-bonded: C130/C139, C266/C378, and C290/C338. N268 carries N-linked (GlcNAc...) asparagine glycosylation. An N-linked (GlcNAc...) asparagine glycan is attached at N465. A disulfide bridge connects residues C514 and C532. Residues A571 to A655 form the Ig-like C2-type domain. 2 N-linked (GlcNAc...) asparagine glycosylation sites follow: N585 and N586. C592 and C643 form a disulfide bridge. Over residues T712–K731 the composition is skewed to basic and acidic residues. Residues T712–S751 form a disordered region.

This sequence belongs to the semaphorin family. In terms of assembly, interacts with PLXND1.

It is found in the secreted. In terms of biological role, binds to plexin family members and plays an important role in the regulation of developmental processes. Required for normal cardiovascular development during embryogenesis. Functions as attractant for growing axons, and thereby plays an important role in axon growth and axon guidance. The chain is Semaphorin-3C (SEMA3C) from Bos taurus (Bovine).